The primary structure comprises 356 residues: S-adenosylmethionine:tRNA ribosyltransferase-isomerase (356 aa).

It belongs to the QueA family. As to quaternary structure, monomer.

The protein localises to the cytoplasm. The catalysed reaction is 7-aminomethyl-7-carbaguanosine(34) in tRNA + S-adenosyl-L-methionine = epoxyqueuosine(34) in tRNA + adenine + L-methionine + 2 H(+). It functions in the pathway tRNA modification; tRNA-queuosine biosynthesis. In terms of biological role, transfers and isomerizes the ribose moiety from AdoMet to the 7-aminomethyl group of 7-deazaguanine (preQ1-tRNA) to give epoxyqueuosine (oQ-tRNA). The protein is S-adenosylmethionine:tRNA ribosyltransferase-isomerase of Escherichia coli O6:K15:H31 (strain 536 / UPEC).